The primary structure comprises 354 residues: Protein-arginine kinase (354 aa).

The Phosphagen kinase C-terminal domain occupies 24 to 254 (IVLSSRIRLA…QQIIQQEKLA (231 aa)). Residues 27 to 31 (SSRIR), His-92, Arg-125, 176 to 180 (RASVM), and 207 to 212 (RGIYGE) each bind ATP. Residues 337-342 (RDYRRA) carry the RDXXRA motif of the pArg binding pocket involved in allosteric regulation motif.

Belongs to the ATP:guanido phosphotransferase family.

It carries out the reaction L-arginyl-[protein] + ATP = N(omega)-phospho-L-arginyl-[protein] + ADP + H(+). Its activity is regulated as follows. Appears to be allosterically activated by the binding of pArg-containing polypeptides to the pArg-binding pocket localized in the C-terminal domain of McsB. In terms of biological role, catalyzes the specific phosphorylation of arginine residues in a large number of proteins. Is part of the bacterial stress response system. Protein arginine phosphorylation has a physiologically important role and is involved in the regulation of many critical cellular processes, such as protein homeostasis, motility, competence, and stringent and stress responses, by regulating gene expression and protein activity. The sequence is that of Protein-arginine kinase from Bacillus cereus (strain B4264).